Reading from the N-terminus, the 1311-residue chain is MPLIDKLRERISRAFYSHGLLCASYPIPIIILTALCILASCYPLLKLPLPGTGPVEYVTSVKDYSPPPLEPNPEDHSDQPDWYVGLPVAFIQQVLVKAVVSPWDKDFLAVDVFRSPLSRVFPLVEEIRNHVLRDKSQEKSLEDVCLQVTDLLPGLKKFRDKLPEHGCLLLSPANFWQNSQEQFSSDPDLIRTIHQHEPKTLQTSATLKDLLFGVPGKQSGVSLYNRKRIVSYTVTIALRRYNATFLDSLRSRLKRQHPSTNSSAASQHIVHVHFKEEIGIAELIPLVTTYIILFAYIYFSTRKIDLVKSKWGLALAAVVTVLSSLLMSVGLCTLFGLTPTLNGGEIFPYLVVVIGLENVLVLTKSVVSTPVDLEVKLRIAQGLRNESWFIMKNMATELGIILIGYFTLVPAIQEFCLFAVVGLVSDFFLQMFFFTTVLSIDIRRMELADLNKRIPAEACIPPPKPGAKRYDRQPTLRPATPHTITLQSLRNLRLPKRLRLVYFFARTRLAQRIIMAGTVVWIGILVYTDPAGLRNYLTVHVTEQSPLGGAVMPPIPVPVLSASNPHGPLSAVFPTGSSQLLENQSQRDSKEVIDSLSSRIWEESHPEDKSKERAAKIEDKAHTQVTWGAEDEETWRKLSFRHWPTLFSYYNITLAKKYISILPMIPVTLYLTPQEVSDARHPQEAQHSHPYLQREGKPDEAWARVEAKGAEKPTENQTPADVTLYKVAALGLASGIFLVLFFFLLYRLLCPKNYGQNGVSHGRRKKGDLPCDDYGYSPPETEIVPLVLRGHHMDIECLASDKMLLVSCCLAGQIRVWDAQSGDCLTIIPKPSLRRESSGVFEYQDNWEPTPECKYNPEESLENGYQLKRRTLHPPLFSDQPDLTSLIDTNFSEQPANEESGARQRLSCIKQESPPIGYDFSSLVQKVYEEHEVSSFGSFPLVLSPAPYGQCQLSSGRRSQTPAGCVDGSCARRKSSTEETTGYCNGSSSPAPSWTDSFESSVWSLGLQGNLIVVGRSNGNLEVWDAIEGSLRCSNCDGQSGITSLVFLNHRVVVARLNGSMDFYCLDSQKSSNQLQFRGAPNRSNVPSSPLYSTDDVIGCQRTHTVACAHRKPITALKAAAGRLVTGSQDHTVRIYRLEDACCLFTLQGHSGGITAIYIDETMVLASGGQDGAICLWDVLTGSRVSHMFGHRGDVTSLLCTASCVISSGLDDVISIWDRSTAIKLYSIQQDLGCGSSLGLISDNLLVTGGLGCVSFWDVGYGDLLQTVYLGKCEDSQPARHILVLDNSAIVCDFGSELSLVYVPSVLEKLD.

Topologically, residues 1–18 (MPLIDKLRERISRAFYSH) are cytoplasmic. Residues 19–39 (GLLCASYPIPIIILTALCILA) traverse the membrane as a helical segment. Residues 40 to 277 (SCYPLLKLPL…HIVHVHFKEE (238 aa)) lie on the Lumenal side of the membrane. Positions 46 to 282 (KLPLPGTGPV…HFKEEIGIAE (237 aa)) are loop-1. 2 N-linked (GlcNAc...) asparagine glycosylation sites follow: Asn242 and Asn261. Residues 278–298 (IGIAELIPLVTTYIILFAYIY) form a helical membrane-spanning segment. Positions 282 to 440 (ELIPLVTTYI…MFFFTTVLSI (159 aa)) constitute an SSD domain. Residues 299 to 310 (FSTRKIDLVKSK) lie on the Cytoplasmic side of the membrane. A helical membrane pass occupies residues 311 to 331 (WGLALAAVVTVLSSLLMSVGL). Residues 332–342 (CTLFGLTPTLN) lie on the Lumenal side of the membrane. A helical transmembrane segment spans residues 343-363 (GGEIFPYLVVVIGLENVLVLT). At 364-399 (KSVVSTPVDLEVKLRIAQGLRNESWFIMKNMATELG) the chain is on the cytoplasmic side. A helical transmembrane segment spans residues 400–420 (IILIGYFTLVPAIQEFCLFAV). Position 421 (Val421) is a topological domain, lumenal. Residues 422 to 442 (GLVSDFFLQMFFFTTVLSIDI) form a helical membrane-spanning segment. The Cytoplasmic segment spans residues 443-512 (RRMELADLNK…FFARTRLAQR (70 aa)). The ER export signal signature appears at 445–450 (MELADL). A helical membrane pass occupies residues 513-533 (IIMAGTVVWIGILVYTDPAGL). The loop-7 stretch occupies residues 529–726 (DPAGLRNYLT…QTPADVTLYK (198 aa)). Residues 534–723 (RNYLTVHVTE…TENQTPADVT (190 aa)) are Lumenal-facing. N-linked (GlcNAc...) asparagine glycosylation is found at Asn583 and Asn651. The helical transmembrane segment at 724 to 744 (LYKVAALGLASGIFLVLFFFL) threads the bilayer. Residues 745–1311 (LYRLLCPKNY…YVPSVLEKLD (567 aa)) lie on the Cytoplasmic side of the membrane. Positions 747–1311 (RLLCPKNYGQ…YVPSVLEKLD (565 aa)) are interaction with srebf. WD repeat units lie at residues 790-827 (GHHMDIECLASDKMLLVSCCLAGQIRVWDAQSGDCLTI), 997-1034 (SFESSVWSLGLQGNLIVVGRSNGNLEVWDAIEGSLRCS), 1037-1076 (DGQSGITSLVFLNHRVVVARLNGSMDFYCLDSQKSSNQLQ), 1109-1146 (AHRKPITALKAAAGRLVTGSQDHTVRIYRLEDACCLFT), 1149-1187 (GHSGGITAIYIDETMVLASGGQDGAICLWDVLTGSRVSH), 1190-1227 (GHRGDVTSLLCTASCVISSGLDDVISIWDRSTAIKLYS), and 1230-1267 (QDLGCGSSLGLISDNLLVTGGLGCVSFWDVGYGDLLQT).

Belongs to the WD repeat SCAP family. Membrane region forms a homotetramer. Component of the SCAP-SREBP complex (composed of SCAP and srebf1/srebp1 or srebf2/srebp2). Forms a ternary complex with insig1 or insig2 through its transmembrane domains at high sterol concentrations. Interacts with the SEC23-SEC24 complex.

It localises to the endoplasmic reticulum membrane. The protein resides in the golgi apparatus membrane. Its subcellular location is the cytoplasmic vesicle. The protein localises to the COPII-coated vesicle membrane. Its function is as follows. Escort protein required for cholesterol as well as lipid homeostasis. Regulates export of the SCAP-SREBP complex from the endoplasmic reticulum to the Golgi upon low cholesterol, thereby regulating the processing of sterol regulatory element-binding proteins (SREBPs) SREBF1/SREBP1 and SREBF2/SREBP2. At high sterol concentrations, formation of a ternary complex with INSIG (INSIG1 or INSIG2) leads to mask the ER export signal in SCAP, promoting retention of the complex in the endoplasmic reticulum. Low sterol concentrations trigger release of INSIG, a conformational change in the SSD domain of SCAP, unmasking of the ER export signal, promoting recruitment into COPII-coated vesicles and transport of the SCAP-SREBP to the Golgi: in the Golgi, SREBPs are then processed, releasing the transcription factor fragment of SREBPs from the membrane, its import into the nucleus and up-regulation of LDLR, INSIG1 and the mevalonate pathway. Binds cholesterol via its SSD domain. The protein is Sterol regulatory element-binding protein cleavage-activating protein of Xenopus laevis (African clawed frog).